Consider the following 575-residue polypeptide: DNA mismatch repair protein MutL (575 aa).

This sequence belongs to the DNA mismatch repair MutL/HexB family.

Functionally, this protein is involved in the repair of mismatches in DNA. It is required for dam-dependent methyl-directed DNA mismatch repair. May act as a 'molecular matchmaker', a protein that promotes the formation of a stable complex between two or more DNA-binding proteins in an ATP-dependent manner without itself being part of a final effector complex. This is DNA mismatch repair protein MutL from Dictyoglomus thermophilum (strain ATCC 35947 / DSM 3960 / H-6-12).